We begin with the raw amino-acid sequence, 64 residues long: Large ribosomal subunit protein bL35 (64 aa).

Residues 1–29 (MPKMKTHSGAKKRFKLTGSGKLRRQQANR) form a disordered region.

The protein belongs to the bacterial ribosomal protein bL35 family.

The protein is Large ribosomal subunit protein bL35 of Pseudarthrobacter chlorophenolicus (strain ATCC 700700 / DSM 12829 / CIP 107037 / JCM 12360 / KCTC 9906 / NCIMB 13794 / A6) (Arthrobacter chlorophenolicus).